A 254-amino-acid chain; its full sequence is Segregation and condensation protein A (254 aa).

This sequence belongs to the ScpA family. In terms of assembly, component of a cohesin-like complex composed of ScpA, ScpB and the Smc homodimer, in which ScpA and ScpB bind to the head domain of Smc. The presence of the three proteins is required for the association of the complex with DNA.

The protein localises to the cytoplasm. Functionally, participates in chromosomal partition during cell division. May act via the formation of a condensin-like complex containing Smc and ScpB that pull DNA away from mid-cell into both cell halves. The polypeptide is Segregation and condensation protein A (Clostridium tetani (strain Massachusetts / E88)).